Reading from the N-terminus, the 162-residue chain is Transcriptional regulator MraZ (162 aa).

2 SpoVT-AbrB domains span residues 11–62 and 98–141; these read EHPS…GLSV and AVEC…SRDT.

The protein belongs to the MraZ family. Forms oligomers.

Its subcellular location is the cytoplasm. It is found in the nucleoid. In Pelobacter propionicus (strain DSM 2379 / NBRC 103807 / OttBd1), this protein is Transcriptional regulator MraZ.